The chain runs to 201 residues: Small ribosomal subunit protein uS4 (201 aa).

Residues 1–38 (MARYTGPATRKSRRLGVDLVGGDQSFEKRPYPPGQHGR) form a disordered region. The 67-residue stretch at 91 to 157 (SRLDNVVYRA…DPFVIARETA (67 aa)) folds into the S4 RNA-binding domain.

Belongs to the universal ribosomal protein uS4 family. As to quaternary structure, part of the 30S ribosomal subunit. Contacts protein S5. The interaction surface between S4 and S5 is involved in control of translational fidelity.

One of the primary rRNA binding proteins, it binds directly to 16S rRNA where it nucleates assembly of the body of the 30S subunit. Its function is as follows. With S5 and S12 plays an important role in translational accuracy. The chain is Small ribosomal subunit protein uS4 from Mycobacterium sp. (strain JLS).